A 313-amino-acid polypeptide reads, in one-letter code: Solute carrier family 35 member E3 (313 aa).

Helical transmembrane passes span 17 to 37 (GLLFNLLVSICIVFLNKWIYV), 40 to 60 (GFPNMSLTLVHFVVTWLGLYI), 77 to 97 (LLLLALSFCGFVVFTNLSLQN), 126 to 143 (FSTRIQLTLIPITLGVIL), 153 to 173 (FLGMVFAALGVLVTSLYQVWV), 187 to 206 (LLYYQAPMSSAMLLVAVPFF), 225 to 245 (LMVLLSGVIAFMVNLSIYWII), 252 to 272 (TYNMFGHFKFCITLFGGYVLF), and 275 to 295 (PLSINQALGILCTLFGILAYT).

It belongs to the TPT transporter family. SLC35E subfamily.

Its subcellular location is the membrane. Functionally, putative transporter. In Homo sapiens (Human), this protein is Solute carrier family 35 member E3 (SLC35E3).